Here is a 118-residue protein sequence, read N- to C-terminus: Large ribosomal subunit protein bL17 (118 aa).

Belongs to the bacterial ribosomal protein bL17 family. In terms of assembly, part of the 50S ribosomal subunit. Contacts protein L32.

The protein is Large ribosomal subunit protein bL17 of Phytoplasma mali (strain AT).